The sequence spans 324 residues: HSF-like protein (324 aa).

The N-terminal stretch at 1-19 (MNSLVALVLLGQIIGSTVS) is a signal peptide. Cystatin fetuin-A-type domains are found at residues 21–130 (QLGP…VKCS) and 141–254 (RDCP…SDCV). 6 cysteine pairs are disulfide-bonded: Cys-28-Cys-315, Cys-85-Cys-96, Cys-110-Cys-129, Cys-143-Cys-146, Cys-205-Cys-217, and Cys-230-Cys-253. An N-linked (GlcNAc...) asparagine glycan is attached at Asn-95. Residue Asn-204 is glycosylated (N-linked (GlcNAc...) asparagine). Residue Asn-282 is glycosylated (N-linked (GlcNAc...) asparagine).

Belongs to the fetuin family. Homodimer. Expressed by the liver.

The protein resides in the secreted. Its function is as follows. May not have antihemorrhagic activity. The polypeptide is HSF-like protein (Protobothrops flavoviridis (Habu)).